The chain runs to 420 residues: Fasciclin-like arabinogalactan protein 8 (420 aa).

A signal peptide spans 1 to 25 (MAASQTFSLLAFTFSLLAFASTVSS). FAS1 domains are found at residues 26-172 (HNIT…DAPI) and 186-326 (SLSN…DNVL). 5 N-linked (GlcNAc...) asparagine glycosylation sites follow: N27, N128, N162, N189, and N273. The tract at residues 335 to 394 (SKSPSPAPAPEPVTAPTPSPADAPSPTAASPPAPPTDESPESAPSDSPTGSANSKSANAA) is disordered. The segment covering 339 to 371 (SPAPAPEPVTAPTPSPADAPSPTAASPPAPPTD) has biased composition (pro residues). N392 carries the GPI-anchor amidated asparagine lipid modification. The propeptide at 393–420 (AAVGVSTPSLFTALVTIAAIAVSVSLCS) is removed in mature form.

The protein belongs to the fasciclin-like AGP family. Expressed mainly in flowers and to a lesser extent in leaves and roots.

It localises to the cell membrane. May be a cell surface adhesion protein. In Arabidopsis thaliana (Mouse-ear cress), this protein is Fasciclin-like arabinogalactan protein 8 (FLA8).